The following is a 181-amino-acid chain: MKNLAPGLLLAMPQLGDPNFYRSVVLMLEHSESGSMGLVINRGAPLTLGELARGQNLGIAAGRKEHSVYLGGPVEPQRGFVLHDDTEQREKHSVLPGLFLSVTLDALGPLLTNPNPRLRFCLGYAGWGPRQLESEIAAGSWLFTEATAEAVLGHEPSKLWDTTLRGMGVDPAMLVMGRGMN.

The protein belongs to the UPF0301 (AlgH) family.

This is UPF0301 protein MXAN_2022 from Myxococcus xanthus (strain DK1622).